A 188-amino-acid chain; its full sequence is Elongation factor P (188 aa).

K34 carries the N6-(3,6-diaminohexanoyl)-5-hydroxylysine modification.

This sequence belongs to the elongation factor P family. May be beta-lysylated on the epsilon-amino group of Lys-34 by the combined action of EpmA and EpmB, and then hydroxylated on the C5 position of the same residue by EpmC (if this protein is present). Lysylation is critical for the stimulatory effect of EF-P on peptide-bond formation. The lysylation moiety may extend toward the peptidyltransferase center and stabilize the terminal 3-CCA end of the tRNA. Hydroxylation of the C5 position on Lys-34 may allow additional potential stabilizing hydrogen-bond interactions with the P-tRNA.

The protein resides in the cytoplasm. Its pathway is protein biosynthesis; polypeptide chain elongation. Involved in peptide bond synthesis. Alleviates ribosome stalling that occurs when 3 or more consecutive Pro residues or the sequence PPG is present in a protein, possibly by augmenting the peptidyl transferase activity of the ribosome. Modification of Lys-34 is required for alleviation. The polypeptide is Elongation factor P (Klebsiella pneumoniae (strain 342)).